A 146-amino-acid polypeptide reads, in one-letter code: Kappa-casein (146 aa).

O-linked (GalNAc...) threonine glycosylation is found at Thr-107 and Thr-112. The residue at position 125 (Ser-125) is a Phosphoserine; alternate. A glycan (O-linked (GalNAc...) serine; alternate) is linked at Ser-125. Thr-142 is a glycosylation site (O-linked (GalNAc...) threonine). Ser-143 bears the Phosphoserine mark.

This sequence belongs to the kappa-casein family. As to expression, mammary gland specific. Secreted in milk.

It localises to the secreted. Kappa-casein stabilizes micelle formation, preventing casein precipitation in milk. The chain is Kappa-casein (CSN3) from Tapirus indicus (Asiatic tapir).